The following is a 1019-amino-acid chain: MRYRLAWLLHSALPSTFRSVLGARLPPSERLCGFQKKTYSKMNNPAIKRIGHHIIKSHEDKREYRGLELANGIKVLLVSDPTTDKSSAALDVHIGSLSDPPNIAGLSHFCEHMLFLGTKKYPKENEYSQFLSEHAGSSNAFTSGEHTNYYFDVSHEHLEGALDRFAQFFLCPLFDESCKDREVNAVDSEHEKNVMNDAWRLFQLEKATGNPKHPFSKFGTGNKYTLETRPNQEGIDVRQELLKFHSTYYSSNLMAICVLGRESLDDLTNLVVKLFSEVENKNVPLPEFPEHPFQEEHLKQLYKIVPIKDIRNLYVTFPIPDLQKYYKSNPGHYLGHLIGHEGPGSLLSELKSKGWVNTLVGGQKEGARGFMFFIINVDLTEEGLLHVEDIILHMFQYIQKLRAEGPQEWVFQECKDLNAVAFRFKDKERPRGYTSKIAGILHYYPLEEVLTAEYLLEEFRPDLIEMVLDKLRPENVRVAIVSKSFEGKTDRTEEWYGTQYKQEAIPDEVIKKWQNADLNGKFKLPMKNEFIPTNFEILSLEKEATPYPSLIKDTAMSKLWFKQDDKFFLPKACLNFEFFSPFAYVDPLHCNMAYLYLELLKDSLNEYAYAAELAGLSYDLQNTIYGMYLSVKGYNDKQPILLKKIIEKMATFEIDEKRFEIIKEAYMRSLNNFRAEQPHQHAMYYLRLLMTEVAWTKDELKEALDDVTLPRLKAFIPQLLSRLHIEALLHGNITKQAALGIMQMVEDTLIEHAHTKPLLPSQLVRYREVQLPDRGWFVYQQRNEVHNNCGIEIYYQTDMQSTSENMFLELFCQIISEPCFNTLRTKEQLGYIVFSGPRRANGIQGLRFIIQSEKPPHYLESRVEAFLITMEKSIEDMTEEAFQKHIQALAIRRLDKPKKLSAECAKYWGEIISQQYNFDRDNIEVAYLKTLTKEDIIKFYKEMLAVDAPRRHKVSVHVLAREMDSCPVVGEFPCQNDINLSQAPALPQPEVIQNMTEFKRGLPLFPLVKPHINFMAAKL.

Zn(2+) is bound at residue His-108. Glu-111 (proton acceptor) is an active-site residue. Zn(2+) contacts are provided by His-112 and Glu-189. Lys-192 is subject to N6-succinyllysine. A substrate-binding site is contributed by 359–363 (LVGGQ). Arg-429 contributes to the ATP binding site. The residue at position 697 (Lys-697) is an N6-succinyllysine. The SlyX motif motif lies at 853–858 (EKPPHY). 895 to 901 (DKPKKLS) contacts ATP.

The protein belongs to the peptidase M16 family. Homodimer. Can also form homotetramers. Zn(2+) is required as a cofactor.

It is found in the cytoplasm. Its subcellular location is the cytosol. The protein localises to the cell membrane. It localises to the secreted. It carries out the reaction Degradation of insulin, glucagon and other polypeptides. No action on proteins.. Its activity is regulated as follows. Activated by ATP, other nucleotide triphosphates and small peptides. Inhibited by bacitracin. Its function is as follows. Plays a role in the cellular breakdown of insulin, APP peptides, IAPP peptides, natriuretic peptides, glucagon, bradykinin, kallidin, and other peptides, and thereby plays a role in intercellular peptide signaling. Substrate binding induces important conformation changes, making it possible to bind and degrade larger substrates, such as insulin. Contributes to the regulation of peptide hormone signaling cascades and regulation of blood glucose homeostasis via its role in the degradation of insulin, glucagon and IAPP. Plays a role in the degradation and clearance of APP-derived amyloidogenic peptides that are secreted by neurons and microglia. Degrades the natriuretic peptides ANP, BNP and CNP, inactivating their ability to raise intracellular cGMP. Also degrades an aberrant frameshifted 40-residue form of NPPA (fsNPPA) which is associated with familial atrial fibrillation in heterozygous patients. Involved in antigen processing. Produces both the N terminus and the C terminus of MAGEA3-derived antigenic peptide (EVDPIGHLY) that is presented to cytotoxic T lymphocytes by MHC class I. This is Insulin-degrading enzyme (IDE) from Bos taurus (Bovine).